The chain runs to 208 residues: Uracil phosphoribosyltransferase (208 aa).

Residues Arg78, Arg103, and 130 to 138 (DPMLATGGS) contribute to the 5-phospho-alpha-D-ribose 1-diphosphate site. Uracil is bound by residues Ile193 and 198–200 (GDA). A 5-phospho-alpha-D-ribose 1-diphosphate-binding site is contributed by Asp199.

Belongs to the UPRTase family. Mg(2+) is required as a cofactor.

It catalyses the reaction UMP + diphosphate = 5-phospho-alpha-D-ribose 1-diphosphate + uracil. It participates in pyrimidine metabolism; UMP biosynthesis via salvage pathway; UMP from uracil: step 1/1. Its activity is regulated as follows. Allosterically activated by GTP. In terms of biological role, catalyzes the conversion of uracil and 5-phospho-alpha-D-ribose 1-diphosphate (PRPP) to UMP and diphosphate. In Shewanella frigidimarina (strain NCIMB 400), this protein is Uracil phosphoribosyltransferase.